The sequence spans 154 residues: MADSSGRVGKSGGSGTGKGAVSAEQVIAGFNRLRQEQRGLASKAAELEMELNEHSLVIDTLKEVDETRKCYRMVGGVLVERTVKEVLPALEGNKEQIQKIIETLSQQLQAKGKELNEFREKHNIRLMGEDEKPAAKENSEGAGAKSSSAGVLVS.

Disordered regions lie at residues 1 to 20 and 126 to 154; these read MADS…GKGA and LMGE…VLVS. Over residues 9 to 18 the composition is skewed to gly residues; sequence GKSGGSGTGK. Residues 126-139 are compositionally biased toward basic and acidic residues; sequence LMGEDEKPAAKENS. Residues 141–154 are compositionally biased toward low complexity; it reads GAGAKSSSAGVLVS.

This sequence belongs to the prefoldin subunit beta family. Heterohexamer of two PFD-alpha type and four PFD-beta type subunits. Component of the PAQosome complex which is responsible for the biogenesis of several protein complexes and which consists of R2TP complex members RUVBL1, RUVBL2, RPAP3 and PIH1D1, URI complex members PFDN2, PFDN6, PDRG1, UXT and URI1 as well as ASDURF, POLR2E and DNAAF10/WDR92. Interacts with URI1; the interaction is phosphorylation-dependent and occurs in a growth-dependent manner.

The protein resides in the nucleus. Its subcellular location is the cytoplasm. It localises to the mitochondrion. Binds specifically to cytosolic chaperonin (c-CPN) and transfers target proteins to it. Binds to nascent polypeptide chain and promotes folding in an environment in which there are many competing pathways for nonnative proteins. In Rattus norvegicus (Rat), this protein is Prefoldin subunit 2 (Pfdn2).